We begin with the raw amino-acid sequence, 357 residues long: Inositol-tetrakisphosphate 1-kinase 3 (357 aa).

Lys-56 and Lys-98 together coordinate 1D-myo-inositol 1,3,4-trisphosphate. ATP is bound by residues Arg-133 and Lys-183. 2 residues coordinate 1D-myo-inositol 1,3,4-trisphosphate: His-190 and Lys-222. Residues 211 to 222 (QEFVNHGGVLFK), Ser-237, and Ser-262 contribute to the ATP site. Mg(2+)-binding residues include Asp-302, Asp-317, and Asn-319. Asn-319 provides a ligand contact to 1D-myo-inositol 1,3,4-trisphosphate.

The protein belongs to the ITPK1 family. In terms of assembly, monomer. It depends on Mg(2+) as a cofactor. In terms of tissue distribution, expressed in roots, leaves, flowers, anthers and embryos.

It catalyses the reaction 1D-myo-inositol 3,4,5,6-tetrakisphosphate + ATP = 1D-myo-inositol 1,3,4,5,6-pentakisphosphate + ADP + H(+). It carries out the reaction 1D-myo-inositol 1,3,4-trisphosphate + ATP = 1D-myo-inositol 1,3,4,5-tetrakisphosphate + ADP + H(+). The enzyme catalyses 1D-myo-inositol 1,3,4-trisphosphate + ATP = 1D-myo-inositol 1,3,4,6-tetrakisphosphate + ADP + H(+). Its function is as follows. Kinase that can phosphorylate various inositol polyphosphate such as Ins(3,4,5,6)P4 or Ins(1,3,4)P3 and participates in phytic acid biosynthesis in developing seeds. Phytic acid is the primary storage form of phosphorus in cereal grains and other plant seeds. The chain is Inositol-tetrakisphosphate 1-kinase 3 from Oryza sativa subsp. japonica (Rice).